Here is an 858-residue protein sequence, read N- to C-terminus: MAELSEEALLSVLPTIRVPKAGDRVHKDECAFSFDTPESEGGLYICMNTFLGFGKQYVERHFNKTGQRVYLHLRRTRRPKEEDTSAGTGDPPRKKPTRLAIGVEGGFDLTEDKFEFDEDVKIVILPDYLEIARDGLGGLPDIVRDRVTSAVEALLSADSASRKQEVQAWDGEVRQVSKHAFNLKQLDNPARIPPCGWKCSKCDMRENLWLNLTDGSILCGRRYFDGSGGNNHAVEHYRETGYPLAVKLGTITPDGADVYSYDEDDMVLDPSLAEHLSHFGIDMLKMQKTDKTMTELEIDMNQRIGEWELIQESGVPLKPLFGPGYTGIRNLGNSCYLNSVVQVLFSIPDFQRKYVDKLEKIFQNAPTDPTQDFSTQVAKLGHGLLSGEYSKPALESGDGEQVPEQKEVQDGIAPRMFKALIGKGHPEFSTNRQQDAQEFFLHLINMVERNCRSSENPNEVFRFLVEEKIKCLATEKVKYTQRVDYIMQLPVPMDAALNKEELLEYEEKKRQAEEEKVPLPELVRAQVPFSSCLEAYGAPEQVDDFWSTALQAKSVAVKTTRFASFPDYLVIQIKKFTFGLDWVPKKLDVSIEMPEELDISQLRGTGLQPGEEELPDIAPPLVTPDEPKGSLGFYGNEDEDSFCSPHFSSPTSPMLDESVIIQLVEMGFPMDACRKAVYYTGNSGAEAAMNWVMSHMDDPDFANPLILPGSSGPGSTSAAADPPPEDCVTTIVSMGFSRDQALKALRATNNSLERAVDWIFSHIDDLDAEAAMDISEGRSAAESISESVPVGPKVRDGPGKYQLFAFISHMGTSTMCGHYVCHIKKEGRWVIYNDQKVCASEKPPKDLGYIYFYQRVVS.

Ala-2 carries the post-translational modification N-acetylalanine. The interval 73 to 98 (LRRTRRPKEEDTSAGTGDPPRKKPTR) is disordered. Residue Lys-113 forms a Glycyl lysine isopeptide (Lys-Gly) (interchain with G-Cter in SUMO) linkage. Ser-149 and Ser-156 each carry phosphoserine. A UBP-type; degenerate zinc finger spans residues 175 to 283 (QVSKHAFNLK…EHLSHFGIDM (109 aa)). The cysteines at positions 195 and 816 are disulfide-linked. Zn(2+) contacts are provided by Cys-199 and Cys-202. Trp-209 contributes to the substrate binding site. Cys-219 contacts Zn(2+). 221 to 224 (RRYF) serves as a coordination point for substrate. Residue His-232 participates in Zn(2+) binding. Positions 259, 261, and 264 each coordinate substrate. Phosphothreonine is present on Thr-292. One can recognise a USP domain in the interval 326 to 856 (TGIRNLGNSC…LGYIYFYQRV (531 aa)). Catalysis depends on Cys-335, which acts as the Nucleophile. Thr-623 carries the phosphothreonine modification. UBA domains follow at residues 654 to 695 (MLDE…VMSH) and 722 to 762 (PPPE…IFSH). Phosphoserine is present on residues Ser-779, Ser-783, and Ser-785. The active-site Proton acceptor is His-818.

It belongs to the peptidase C19 family. In terms of assembly, homodimer. Interacts with TRIML1. Post-translationally, SUMOylated at Lys-113; SUMOylation affects the interaction with Cav3.2 channels. In terms of processing, ubiquitinated by SMURF1; leading to proteasomal degradation.

It localises to the cytoplasm. The protein localises to the stress granule. The protein resides in the nucleus. The enzyme catalyses Thiol-dependent hydrolysis of ester, thioester, amide, peptide and isopeptide bonds formed by the C-terminal Gly of ubiquitin (a 76-residue protein attached to proteins as an intracellular targeting signal).. Deubiquitinating enzyme that participates in a wide range of cellular processes by specifically cleaving isopeptide bonds between ubiquitin and substrate proteins or ubiquitin itself. Affects thereby important cellular signaling pathways such as NF-kappa-B, Wnt/beta-catenin, and cytokine production by regulating ubiquitin-dependent protein degradation. Participates in the activation of the Wnt signaling pathway by promoting FOXM1 deubiquitination and stabilization that induces the recruitment of beta-catenin to Wnt target gene promoter. Regulates the assembly and disassembly of heat-induced stress granules by mediating the hydrolysis of unanchored ubiquitin chains. Promotes lipopolysaccharide-induced apoptosis and inflammatory response by stabilizing the TXNIP protein. Affects T-cell biology by stabilizing the inhibitory receptor on T-cells PDC1. Acts as a negative regulator of autophagy by regulating ULK1 at both protein and mRNA levels. Acts also as a negative regulator of type I interferon production by simultaneously removing both 'Lys-48'-linked unanchored and 'Lys-63'-linked anchored polyubiquitin chains on the transcription factor IRF3. Modulates the stability of DNA mismatch repair protein MLH1 and counteracts the effect of the ubiquitin ligase UBR4. Upon activation by insulin, it gets phosphorylated through mTORC1-mediated phosphorylation to enhance YTHDF1 stability by removing 'Lys-11'-linked polyubiquitination. May also deubiquitinate other substrates such as the calcium channel CACNA1H. The polypeptide is Ubiquitin carboxyl-terminal hydrolase 5 (Usp5) (Mus musculus (Mouse)).